The following is a 412-amino-acid chain: Isocitrate dehydrogenase [NADP] cytoplasmic (412 aa).

NADP(+) is bound by residues 76–78 (TIT) and Arg83. Thr78 contributes to the substrate binding site. Residues 95-101 (SPNGTIR), Arg110, and Arg133 each bind substrate. Asp253 is a binding site for Mn(2+). NADP(+) is bound at residue Lys261. A Mn(2+)-binding site is contributed by Asp276. NADP(+) contacts are provided by residues 309 to 314 (GTVTRH) and Asn327.

Belongs to the isocitrate and isopropylmalate dehydrogenases family. Homodimer. It depends on Mg(2+) as a cofactor. Requires Mn(2+) as cofactor.

The protein resides in the cytoplasm. It carries out the reaction D-threo-isocitrate + NADP(+) = 2-oxoglutarate + CO2 + NADPH. This chain is Isocitrate dehydrogenase [NADP] cytoplasmic (idhC), found in Dictyostelium discoideum (Social amoeba).